Reading from the N-terminus, the 154-residue chain is Myoglobin (154 aa).

The Globin domain occupies 2–148; sequence GLSDGEWQLV…FRKDIAAKYK (147 aa). Ser4 carries the post-translational modification Phosphoserine. His65 is a nitrite binding site. Position 65 (His65) interacts with O2. A Phosphothreonine modification is found at Thr68. A heme b-binding site is contributed by His94.

It belongs to the globin family. As to quaternary structure, monomeric.

The protein localises to the cytoplasm. The protein resides in the sarcoplasm. It catalyses the reaction Fe(III)-heme b-[protein] + nitric oxide + H2O = Fe(II)-heme b-[protein] + nitrite + 2 H(+). The enzyme catalyses H2O2 + AH2 = A + 2 H2O. Functionally, monomeric heme protein which primary function is to store oxygen and facilitate its diffusion within muscle tissues. Reversibly binds oxygen through a pentacoordinated heme iron and enables its timely and efficient release as needed during periods of heightened demand. Depending on the oxidative conditions of tissues and cells, and in addition to its ability to bind oxygen, it also has a nitrite reductase activity whereby it regulates the production of bioactive nitric oxide. Under stress conditions, like hypoxia and anoxia, it also protects cells against reactive oxygen species thanks to its pseudoperoxidase activity. The sequence is that of Myoglobin (MB) from Castor fiber (Eurasian beaver).